A 500-amino-acid chain; its full sequence is Lysine--tRNA ligase (500 aa).

Residues E410 and E417 each contribute to the Mg(2+) site.

This sequence belongs to the class-II aminoacyl-tRNA synthetase family. As to quaternary structure, homodimer. Requires Mg(2+) as cofactor.

It localises to the cytoplasm. The catalysed reaction is tRNA(Lys) + L-lysine + ATP = L-lysyl-tRNA(Lys) + AMP + diphosphate. The chain is Lysine--tRNA ligase from Pseudomonas putida (strain W619).